We begin with the raw amino-acid sequence, 562 residues long: Eukaryotic translation initiation factor 3 subunit L (562 aa).

The interval 1-29 (MSHAKEDYDSSYDPYSYQADYDGHTGDPK) is disordered. Residues 11–20 (SYDPYSYQAD) show a composition bias toward low complexity. The region spanning 329 to 535 (DSIRVFANIL…IHIADTKVAR (207 aa)) is the PCI domain.

This sequence belongs to the eIF-3 subunit L family. In terms of assembly, component of the eukaryotic translation initiation factor 3 (eIF-3) complex, which is composed of 13 subunits: eif3a, eif3b, eif3c, eif3d, eif3e, eif3f, eif3g, eif3h, eif3i, eif3j, eif3k, eif3l and eif3m.

The protein localises to the cytoplasm. Functionally, component of the eukaryotic translation initiation factor 3 (eIF-3) complex, which is involved in protein synthesis of a specialized repertoire of mRNAs and, together with other initiation factors, stimulates binding of mRNA and methionyl-tRNAi to the 40S ribosome. The eIF-3 complex specifically targets and initiates translation of a subset of mRNAs involved in cell proliferation. The chain is Eukaryotic translation initiation factor 3 subunit L (eif3l) from Xenopus laevis (African clawed frog).